Here is a 115-residue protein sequence, read N- to C-terminus: Large ribosomal subunit protein bL20 (115 aa).

It belongs to the bacterial ribosomal protein bL20 family.

Binds directly to 23S ribosomal RNA and is necessary for the in vitro assembly process of the 50S ribosomal subunit. It is not involved in the protein synthesizing functions of that subunit. The chain is Large ribosomal subunit protein bL20 from Prochlorococcus marinus subsp. pastoris (strain CCMP1986 / NIES-2087 / MED4).